The chain runs to 254 residues: Tumor necrosis factor ligand superfamily member 9 (254 aa).

At 1 to 28 (MEYASDASLDPEAPWPPAPRARACRVLP) the chain is on the cytoplasmic side. A helical; Signal-anchor for type II membrane protein transmembrane segment spans residues 29–49 (WALVAGLLLLLLLAAACAVFL). Residues 50 to 254 (ACPWAVSGAR…PAGLPSPRSE (205 aa)) lie on the Extracellular side of the membrane. Residues 91 to 240 (MFAQLVAQNV…GATVLGLFRV (150 aa)) enclose the THD domain.

This sequence belongs to the tumor necrosis factor family. As to quaternary structure, homotrimer. Expressed in brain, placenta, lung, skeletal muscle and kidney.

Its subcellular location is the membrane. In terms of biological role, cytokine that binds to TNFRSF9. Induces the proliferation of activated peripheral blood T-cells. May have a role in activation-induced cell death (AICD). May play a role in cognate interactions between T-cells and B-cells/macrophages. The chain is Tumor necrosis factor ligand superfamily member 9 (TNFSF9) from Homo sapiens (Human).